The following is a 1737-amino-acid chain: Myosin-M heavy chain (1737 aa).

The 52-residue stretch at 4–55 folds into the Myosin N-terminal SH3-like domain; sequence LEGDIVWVPHTVNGYCRGKIIGYNEKNQVTVRLLELNEEIKINEQLIQNYNQ. Residues 59 to 886 enclose the Myosin motor domain; it reads KDFSDMVEIQ…LYIYLEKKRY (828 aa). 154–161 is an ATP binding site; the sequence is GESGSGKT. A disordered region spans residues 640-727; that stretch reads KSNDNNSNNN…NNNSSNNKKS (88 aa). Low complexity-rich tracts occupy residues 641–663 and 679–724; these read SNDN…SSQS and NSGS…SSNN. Residues 754–761 are actin-binding; the sequence is YIRCIKPN. IQ domains follow at residues 889-918 and 912-941; these read LVDS…SSLF and NKES…LENK. Residues 926–1039 adopt a coiled-coil conformation; sequence QRAKKDFEQL…KKKNEQNLSL (114 aa). Over residues 947–1028 the composition is skewed to basic and acidic residues; the sequence is RKKELERQRK…IEKKRKEEEK (82 aa). Disordered stretches follow at residues 947 to 1099, 1117 to 1199, 1266 to 1290, and 1304 to 1364; these read RKKE…PSTK, LHGS…PNFN, GINK…ANSS, and SLST…SNED. The span at 1044-1070 shows a compositional bias: low complexity; that stretch reads ITNSPSLINTTTTTTTTTTTTTNTSSP. Positions 1071-1081 are enriched in pro residues; the sequence is PLSPPISPRPS. The segment covering 1082–1098 has biased composition (low complexity); it reads TPSSTSSSSSTTSSPST. Basic and acidic residues predominate over residues 1121 to 1131; the sequence is SHSDKNSKEDN. Low complexity predominate over residues 1132-1141; sequence NSNNNNNGDS. The span at 1143–1153 shows a compositional bias: polar residues; that stretch reads IILSSDSSFGQ. The span at 1162–1171 shows a compositional bias: pro residues; that stretch reads PTPPPPPPLK. Composition is skewed to polar residues over residues 1180-1198 and 1274-1288; these read GVEN…SPNF and RTIS…SRAN. Residues 1304 to 1359 are compositionally biased toward low complexity; it reads SLSTSTTPSTPTTPKTPTTLSSSSVSTSTSLSSVSSSVSSSSSSSIPTPIIESTPS. Residues 1389–1572 form the DH domain; the sequence is FRIKIINELI…SDIVQSINEA (184 aa). In terms of domain architecture, PH spans 1603-1714; the sequence is TLLMEGTVSA…WFKQIKALIQ (112 aa).

Belongs to the TRAFAC class myosin-kinesin ATPase superfamily. Myosin family. Monomer.

The protein resides in the cytoplasm. Functionally, myosins are actin-based motor molecules with ATPase activity. Involved in macropinocytosis and remodeling of actin cytoskeleton. The sequence is that of Myosin-M heavy chain (myoM) from Dictyostelium discoideum (Social amoeba).